The primary structure comprises 93 residues: Parbolysin P4 (93 aa).

3 disulfides stabilise this stretch: Cys-16–Cys-37, Cys-22–Cys-33, and Cys-47–Cys-60.

Belongs to the worm cytolysin family. Localized within the skin and proboscis and are most readily isolated from body mucus secretions.

Its subcellular location is the secreted. Its function is as follows. Cytolysin that shows hemolytic activity (on bovine erythrocytes, HC(50)=5.75 mg/ml). This hemolytic activity is completely inhibited by small unilamelar vesicles composed of PC/PG, PC/PI and PC/PS in 1:1 molar ratios (with at least 100 mg/ml concentration). The sequence is that of Parbolysin P4 from Parborlasia corrugatus (Antarctic nemertean worm).